The chain runs to 917 residues: Probable dipeptidyl-aminopeptidase B (917 aa).

Basic and acidic residues predominate over residues 1–16 (MATEKGHGRDDEERVP). Residues 1–21 (MATEKGHGRDDEERVPLTRGS) form a disordered region. At 1–99 (MATEKGHGRD…KPMHKSVKIA (99 aa)) the chain is on the cytoplasmic side. Residues 100–120 (LWTLLFLSLGGWSLAFVLFIF) traverse the membrane as a helical; Signal-anchor for type II membrane protein segment. The Vacuolar portion of the chain corresponds to 121-917 (RSHDTYETPI…RAATWAGLSI (797 aa)). 3 N-linked (GlcNAc...) asparagine glycosylation sites follow: N135, N351, and N574. S756 acts as the Charge relay system in catalysis. N815 carries an N-linked (GlcNAc...) asparagine glycan. Catalysis depends on charge relay system residues D833 and H866. N902 carries N-linked (GlcNAc...) asparagine glycosylation.

It belongs to the peptidase S9B family.

The protein resides in the vacuole membrane. The enzyme catalyses Release of an N-terminal dipeptide, Xaa-Yaa-|-Zaa-, from a polypeptide, preferentially when Yaa is Pro, provided Zaa is neither Pro nor hydroxyproline.. Functionally, type IV dipeptidyl-peptidase which removes N-terminal dipeptides sequentially from polypeptides having unsubstituted N-termini provided that the penultimate residue is proline. The protein is Probable dipeptidyl-aminopeptidase B (DAPB) of Ajellomyces capsulatus (strain H88) (Darling's disease fungus).